A 417-amino-acid chain; its full sequence is NADH-quinone oxidoreductase subunit D (417 aa).

The protein belongs to the complex I 49 kDa subunit family. As to quaternary structure, NDH-1 is composed of 14 different subunits. Subunits NuoB, C, D, E, F, and G constitute the peripheral sector of the complex.

It is found in the cell inner membrane. The enzyme catalyses a quinone + NADH + 5 H(+)(in) = a quinol + NAD(+) + 4 H(+)(out). Its function is as follows. NDH-1 shuttles electrons from NADH, via FMN and iron-sulfur (Fe-S) centers, to quinones in the respiratory chain. The immediate electron acceptor for the enzyme in this species is believed to be ubiquinone. Couples the redox reaction to proton translocation (for every two electrons transferred, four hydrogen ions are translocated across the cytoplasmic membrane), and thus conserves the redox energy in a proton gradient. The polypeptide is NADH-quinone oxidoreductase subunit D (Burkholderia lata (strain ATCC 17760 / DSM 23089 / LMG 22485 / NCIMB 9086 / R18194 / 383)).